The primary structure comprises 167 residues: Phospholipase A2 inhibitor alpha-like protein (167 aa).

The signal sequence occupies residues methionine 1 to glycine 19. Residues glycine 62–glutamate 163 enclose the C-type lectin domain. Cystine bridges form between cysteine 83-cysteine 162 and cysteine 140-cysteine 154.

The protein belongs to the alpha-type phospholipase A2 inhibitor family. As to quaternary structure, homotrimer.

Its subcellular location is the secreted. Has no PLA2 inhibitory activity. This is Phospholipase A2 inhibitor alpha-like protein from Elaphe climacophora (Japanese rat snake).